The following is a 380-amino-acid chain: Queuine tRNA-ribosyltransferase (380 aa).

Residue Asp-96 is the Proton acceptor of the active site. Residues 96 to 100, Asp-150, Gln-193, and Gly-220 each bind substrate; that span reads DSGGF. The tract at residues 251 to 257 is RNA binding; the sequence is GVGAPDS. Asp-270 serves as the catalytic Nucleophile. The tract at residues 275 to 279 is RNA binding; important for wobble base 34 recognition; sequence TRIAR. Residues Cys-308, Cys-310, Cys-313, and His-339 each contribute to the Zn(2+) site.

It belongs to the queuine tRNA-ribosyltransferase family. Homodimer. Within each dimer, one monomer is responsible for RNA recognition and catalysis, while the other monomer binds to the replacement base PreQ1. Requires Zn(2+) as cofactor.

The enzyme catalyses 7-aminomethyl-7-carbaguanine + guanosine(34) in tRNA = 7-aminomethyl-7-carbaguanosine(34) in tRNA + guanine. Its pathway is tRNA modification; tRNA-queuosine biosynthesis. Functionally, catalyzes the base-exchange of a guanine (G) residue with the queuine precursor 7-aminomethyl-7-deazaguanine (PreQ1) at position 34 (anticodon wobble position) in tRNAs with GU(N) anticodons (tRNA-Asp, -Asn, -His and -Tyr). Catalysis occurs through a double-displacement mechanism. The nucleophile active site attacks the C1' of nucleotide 34 to detach the guanine base from the RNA, forming a covalent enzyme-RNA intermediate. The proton acceptor active site deprotonates the incoming PreQ1, allowing a nucleophilic attack on the C1' of the ribose to form the product. After dissociation, two additional enzymatic reactions on the tRNA convert PreQ1 to queuine (Q), resulting in the hypermodified nucleoside queuosine (7-(((4,5-cis-dihydroxy-2-cyclopenten-1-yl)amino)methyl)-7-deazaguanosine). In Streptococcus mutans serotype c (strain ATCC 700610 / UA159), this protein is Queuine tRNA-ribosyltransferase.